The following is a 599-amino-acid chain: Elongation factor 4 (599 aa).

Positions Lys2–Glu184 constitute a tr-type G domain. GTP is bound by residues Asp14–Thr19 and Asn131–Asp134.

It belongs to the TRAFAC class translation factor GTPase superfamily. Classic translation factor GTPase family. LepA subfamily.

The protein resides in the cell inner membrane. It carries out the reaction GTP + H2O = GDP + phosphate + H(+). Functionally, required for accurate and efficient protein synthesis under certain stress conditions. May act as a fidelity factor of the translation reaction, by catalyzing a one-codon backward translocation of tRNAs on improperly translocated ribosomes. Back-translocation proceeds from a post-translocation (POST) complex to a pre-translocation (PRE) complex, thus giving elongation factor G a second chance to translocate the tRNAs correctly. Binds to ribosomes in a GTP-dependent manner. This Escherichia coli (strain SE11) protein is Elongation factor 4.